Here is a 213-residue protein sequence, read N- to C-terminus: Ras-related protein Rab-25 (213 aa).

Residues Ser-21, Gly-24, Lys-25, Thr-26, Asn-27, Ser-38, His-39, Thr-43, and Thr-44 each contribute to the GTP site. Residue Thr-26 coordinates Mg(2+). Short sequence motifs (switch) lie at residues 35–49 (NEFS…GVEF) and 67–84 (DTAG…YYRG). Residues Thr-44 and Asp-67 each contribute to the Mg(2+) site. GTP contacts are provided by Gly-70, Asn-125, Lys-126, Asp-128, Ala-156, and Leu-157. S-geranylgeranyl cysteine attachment occurs at residues Cys-209 and Cys-210. Cys-210 is modified (cysteine methyl ester). Positions 211-213 (INL) are cleaved as a propeptide — removed in mature form.

The protein belongs to the small GTPase superfamily. Rab family. As to quaternary structure, interacts (GTP-bound form) with RAB11FIP1, RAB11FIP2, RAB11FIP3 and RAB11FIP4. Interacts (via the hypervariable C-terminal region) with ITGB1 (via the cytoplasmic region); the interaction is GTP-dependent. Interacts with ITGAV. Associates with the integrin alpha-V/beta-1 heterodimer. Interacts with VPS33B. Requires Mg(2+) as cofactor. As to expression, expression is restricted to epithelial cells. Expressed in the gastrointestinal mucosa, (highest expression seen in the ileum and colon), kidney, and lung. A very minor and variable level of expression is seen in the splenic tissue.

It is found in the cell membrane. It localises to the cell projection. The protein localises to the pseudopodium membrane. Its subcellular location is the cytoplasmic vesicle. The enzyme catalyses GTP + H2O = GDP + phosphate + H(+). With respect to regulation, regulated by guanine nucleotide exchange factors (GEFs) which promote the exchange of bound GDP for free GTP. Regulated by GTPase activating proteins (GAPs) which increase the GTP hydrolysis activity. Inhibited by GDP dissociation inhibitors (GDIs) which prevent Rab-GDP dissociation. The small GTPases Rab are key regulators of intracellular membrane trafficking, from the formation of transport vesicles to their fusion with membranes. Rabs cycle between an inactive GDP-bound form and an active GTP-bound form that is able to recruit to membranes different set of downstream effectors directly responsible for vesicle formation, movement, tethering and fusion. RAB25 regulates epithelial cell differentiation, proliferation and survival, thereby playing key roles in tumorigenesis. Promotes invasive migration of cells in which it functions to localize and maintain integrin alpha-V/beta-1 at the tips of extending pseudopodia. Involved in the regulation of epithelial morphogenesis through the control of CLDN4 expression and localization at tight junctions. May selectively regulate the apical recycling pathway. Together with MYO5B regulates transcytosis. This is Ras-related protein Rab-25 (RAB25) from Oryctolagus cuniculus (Rabbit).